The sequence spans 438 residues: Histidinol dehydrogenase (438 aa).

Residues tyrosine 138, glutamine 199, and asparagine 222 each coordinate NAD(+). Substrate contacts are provided by serine 245, glutamine 267, and histidine 270. Glutamine 267 and histidine 270 together coordinate Zn(2+). Active-site proton acceptor residues include glutamate 335 and histidine 336. The substrate site is built by histidine 336, aspartate 369, glutamate 423, and histidine 428. Aspartate 369 contacts Zn(2+). A Zn(2+)-binding site is contributed by histidine 428.

This sequence belongs to the histidinol dehydrogenase family. Zn(2+) serves as cofactor.

It carries out the reaction L-histidinol + 2 NAD(+) + H2O = L-histidine + 2 NADH + 3 H(+). The protein operates within amino-acid biosynthesis; L-histidine biosynthesis; L-histidine from 5-phospho-alpha-D-ribose 1-diphosphate: step 9/9. Catalyzes the sequential NAD-dependent oxidations of L-histidinol to L-histidinaldehyde and then to L-histidine. The sequence is that of Histidinol dehydrogenase from Burkholderia lata (strain ATCC 17760 / DSM 23089 / LMG 22485 / NCIMB 9086 / R18194 / 383).